The primary structure comprises 574 residues: DNA-directed primase/polymerase protein (574 aa).

Residues 2 to 22 (KRKWEERVKKVEELASYYERN) are a coiled coil. Residues Arg76, 116–118 (DLE), 167–171 (KFSRH), 291–294 (RNFR), and Lys300 contribute to the substrate site. The Mn(2+) site is built by Asp116 and Glu118. The Zn(2+) site is built by Cys424, His431, Cys451, and Cys456. The Zinc knuckle motif motif lies at 424-457 (CENIGRAHRSNNIMILVDLKKEVWYQKCHDPVCR).

The protein belongs to the eukaryotic-type primase small subunit family. Mn(2+) serves as cofactor.

The protein localises to the nucleus. Its subcellular location is the mitochondrion matrix. It is found in the chromosome. It carries out the reaction ssDNA + n NTP = ssDNA/pppN(pN)n-1 hybrid + (n-1) diphosphate.. The enzyme catalyses DNA(n) + a 2'-deoxyribonucleoside 5'-triphosphate = DNA(n+1) + diphosphate. In terms of biological role, DNA primase and DNA polymerase required to tolerate replication-stalling lesions by bypassing them. Required to facilitate mitochondrial and nuclear replication fork progression by initiating de novo DNA synthesis using dNTPs and acting as an error-prone DNA polymerase able to bypass certain DNA lesions. Shows a high capacity to tolerate DNA damage lesions such as 8oxoG and abasic sites in DNA. Provides different translesion synthesis alternatives when DNA replication is stalled: able to synthesize DNA primers downstream of lesions, such as UV lesions, R-loops and G-quadruplexes, to allow DNA replication to continue. Can also realign primers ahead of 'unreadable lesions' such as abasic sites and 6-4 photoproduct (6-4 pyrimidine-pyrimidinone), thereby skipping the lesion. Repriming avoids fork degradation while leading to accumulation of internal ssDNA gaps behind the forks. Also able to incorporate nucleotides opposite DNA lesions such as 8oxoG, like a regular translesion synthesis DNA polymerase. Also required for reinitiating stalled forks after ultraviolet (UV) damage during nuclear DNA replication. Required for mitochondrial DNA (mtDNA) synthesis and replication, by reinitiating synthesis after UV damage or in the presence of chain-terminating nucleotides. In addition to its role in DNA damage response, also required to maintain efficient nuclear and mitochondrial DNA replication in unperturbed cells. The protein is DNA-directed primase/polymerase protein of Gallus gallus (Chicken).